The following is a 305-amino-acid chain: RxLR effector protein PexRD25 (305 aa).

An N-terminal signal peptide occupies residues 1-16 (MRFLFYMLLACSAVVA). Positions 44–56 (RLLRDRRSVDEER) match the RxLR-dEER motif.

The protein belongs to the RxLR effector family.

The protein localises to the secreted. The protein resides in the host nucleus. It is found in the host nucleolus. Its function is as follows. Effector that enhances P.infestans colonization of Nicotiana benthamiana leaves. The chain is RxLR effector protein PexRD25 from Phytophthora infestans (strain T30-4) (Potato late blight agent).